Here is a 197-residue protein sequence, read N- to C-terminus: ATP-dependent Clp protease proteolytic subunit 1 (197 aa).

Catalysis depends on serine 88, which acts as the Nucleophile. Residue histidine 113 is part of the active site.

This sequence belongs to the peptidase S14 family. In terms of assembly, fourteen ClpP subunits assemble into 2 heptameric rings which stack back to back to give a disk-like structure with a central cavity, resembling the structure of eukaryotic proteasomes.

Its subcellular location is the cytoplasm. The catalysed reaction is Hydrolysis of proteins to small peptides in the presence of ATP and magnesium. alpha-casein is the usual test substrate. In the absence of ATP, only oligopeptides shorter than five residues are hydrolyzed (such as succinyl-Leu-Tyr-|-NHMec, and Leu-Tyr-Leu-|-Tyr-Trp, in which cleavage of the -Tyr-|-Leu- and -Tyr-|-Trp bonds also occurs).. Its function is as follows. Cleaves peptides in various proteins in a process that requires ATP hydrolysis. Has a chymotrypsin-like activity. Plays a major role in the degradation of misfolded proteins. The polypeptide is ATP-dependent Clp protease proteolytic subunit 1 (Leifsonia xyli subsp. xyli (strain CTCB07)).